The chain runs to 595 residues: Myb-like protein D (595 aa).

Disordered stretches follow at residues 1-47, 55-74, 82-266, and 319-445; these read MQQQ…NGLV, QQYQ…DEGE, DESQ…NNRK, and VLQK…IWTQ. Residues 19 to 47 are compositionally biased toward low complexity; it reads DNYNNNNSNINTNNNNSINDYENQNNGLV. Residues 60-74 are compositionally biased toward acidic residues; that stretch reads DQNDSFDDDSMDEGE. Low complexity-rich tracts occupy residues 90–212 and 225–264; these read NNNN…ENNN and NNNN…NNNN. The segment covering 324-348 has biased composition (basic residues); that stretch reads TLNRNRSRSRSRSNSRSHSRSRSRS. Composition is skewed to low complexity over residues 349–368 and 376–420; these read RSLS…YSRS and NNNN…NNNN. The segment covering 423–434 has biased composition (basic and acidic residues); sequence RKSEDDNQDDGK. The HTH myb-type domain maps to 435–489; the sequence is KKHRKNAIWTQEEDEKMAQLYNKYGKSWKAIHSHFDDKTREQVQSHGQYLIRIGK. The segment at residues 462–485 is a DNA-binding region (H-T-H motif); the sequence is WKAIHSHFDDKTREQVQSHGQYLI. Residues 494–595 form a disordered region; the sequence is HRDGRKERRK…NSSNYVNNDN (102 aa). Positions 517–595 are enriched in low complexity; the sequence is QQNQQNNNNN…NSSNYVNNDN (79 aa).

Its subcellular location is the nucleus. The protein is Myb-like protein D (mybD) of Dictyostelium discoideum (Social amoeba).